We begin with the raw amino-acid sequence, 123 residues long: uncharacterized protein (123 aa).

Thr-56 is subject to Phosphothreonine. A phosphoserine mark is found at Ser-73, Ser-87, Ser-97, Ser-113, and Ser-119.

Highly expressed in the kidney (at protein level).

Its subcellular location is the cytoplasm. This is an uncharacterized protein from Felis catus (Cat).